The chain runs to 152 residues: Ribosome maturation factor RimP (152 aa).

This sequence belongs to the RimP family.

It localises to the cytoplasm. Its function is as follows. Required for maturation of 30S ribosomal subunits. The chain is Ribosome maturation factor RimP from Pseudothermotoga lettingae (strain ATCC BAA-301 / DSM 14385 / NBRC 107922 / TMO) (Thermotoga lettingae).